Reading from the N-terminus, the 218-residue chain is Thiopurine S-methyltransferase (218 aa).

S-adenosyl-L-methionine contacts are provided by W10, L45, E66, and R123.

The protein belongs to the class I-like SAM-binding methyltransferase superfamily. TPMT family.

Its subcellular location is the cytoplasm. The enzyme catalyses S-adenosyl-L-methionine + a thiopurine = S-adenosyl-L-homocysteine + a thiopurine S-methylether.. In Pseudomonas aeruginosa (strain LESB58), this protein is Thiopurine S-methyltransferase.